Consider the following 145-residue polypeptide: UPF0260 protein VC_1058 (145 aa).

It belongs to the UPF0260 family.

The chain is UPF0260 protein VC_1058 from Vibrio cholerae serotype O1 (strain ATCC 39315 / El Tor Inaba N16961).